We begin with the raw amino-acid sequence, 107 residues long: RecQ-mediated genome instability protein 2 homolog (107 aa).

It belongs to the RMI2 family. As to quaternary structure, component of the RMI complex, containing at least top-3, rmh-1 and rmh-2. Component of the BTR double Holliday Junction dissolution complex composed of at least him-6, top-3, rmh-1 and rmif-2, which is involved in double strand break repair in the germline. Interacts with rmh-1; the interaction is direct and is required for mutual stability and localization at nuclear foci. In terms of tissue distribution, expressed in the germline.

The protein localises to the nucleus. Its function is as follows. Essential component of the RMI complex, a complex that plays an important role in the processing of homologous recombination intermediates. Component of the BTR double Holliday Junction dissolution complex, which is involved in homologous recombination during meiotic double strand break in the germline. Plays a role in double strand break repair by positively regulating the accumulation of rad-51 at double strand breaks. Stabilizes and positively regulates the localization of the BTR double Holliday Junction dissolution complex components rmh-1, him-6 and top-3 at nuclear foci during meiotic recombination. Positively regulates meiotic recombination, chiasma formation, and chromosome segregation in meiosis. Positively regulates DNA crossover formation and positioning on chromosome arms (away from the chromosome center) during homologous recombination. The sequence is that of RecQ-mediated genome instability protein 2 homolog from Caenorhabditis elegans.